We begin with the raw amino-acid sequence, 354 residues long: Peptide chain release factor 1 (354 aa).

Residue Q232 is modified to N5-methylglutamine.

The protein belongs to the prokaryotic/mitochondrial release factor family. In terms of processing, methylated by PrmC. Methylation increases the termination efficiency of RF1.

Its subcellular location is the cytoplasm. Its function is as follows. Peptide chain release factor 1 directs the termination of translation in response to the peptide chain termination codons UAG and UAA. The protein is Peptide chain release factor 1 of Jannaschia sp. (strain CCS1).